Here is a 272-residue protein sequence, read N- to C-terminus: MHFYIPPPPISGFWLGPLYVHMYSVFMLAGALVLFELTNRRFIVLTGNREFTAFAVTSLLIPVILGARLWHVVSHTQMYEHQPFYKVFAIWQGGLGFIGGVFSGLICFFVIAKIKKVPPFTFLDALAPGILVALCFARLGNYFNGEVFGTETTLPWGLKLSHEGFKDLNVEKYFHPIFLYEIILNVFIIVILLVLEKRVFVKTVFPKGSVFAAFLVLYGLGRFALEPMRYNLQQNSFGLDLNYVGAAAMIIVGVLIACRHTIASGKLRNSGD.

Helical transmembrane passes span 15–35 (LGPL…LVLF), 53–73 (AFAV…WHVV), 94–114 (GLGF…IAKI), and 117–137 (VPPF…LCFA). Arg138 is an a 1,2-diacyl-sn-glycero-3-phospho-(1'-sn-glycerol) binding site. The next 3 membrane-spanning stretches (helical) occupy residues 174-194 (FHPI…ILLV), 199-219 (VFVK…VLYG), and 237-257 (FGLD…VLIA).

It belongs to the Lgt family.

It localises to the cell membrane. It catalyses the reaction L-cysteinyl-[prolipoprotein] + a 1,2-diacyl-sn-glycero-3-phospho-(1'-sn-glycerol) = an S-1,2-diacyl-sn-glyceryl-L-cysteinyl-[prolipoprotein] + sn-glycerol 1-phosphate + H(+). The protein operates within protein modification; lipoprotein biosynthesis (diacylglyceryl transfer). Functionally, catalyzes the transfer of the diacylglyceryl group from phosphatidylglycerol to the sulfhydryl group of the N-terminal cysteine of a prolipoprotein, the first step in the formation of mature lipoproteins. The protein is Phosphatidylglycerol--prolipoprotein diacylglyceryl transferase of Tropheryma whipplei (strain TW08/27) (Whipple's bacillus).